The chain runs to 261 residues: MGKAFSQLTSQKDEDKSILPDNPAMASKAANYFSTGNRKPSHSCVPCEKAASTSFVTCPTCQGNGEIPQELEKQLVALIPYGDQRLKPRRTKLSVFLAVTICLLIFSLTIFFLYPRNIVVHPVGLNSSTVAFDETHVQLNMTNVLNITNSNFYPVTVTQLTAEVLHQTSVVGQVTSSLRLHIGPLASKQMPYEVASRILDENTYKICTWPKIRVHHILVNIQGALTCSYLTHPQQLPFESFEYVDCRENMSMPHLELPRPA.

Polar residues predominate over residues 1-10 (MGKAFSQLTS). Residues 1–22 (MGKAFSQLTSQKDEDKSILPDN) are disordered. Residues 93–113 (LSVFLAVTICLLIFSLTIFFL) traverse the membrane as a helical segment.

Belongs to the TMEM106 family.

It is found in the cell membrane. Functionally, activates macrophages and polarizes them into M1-like macrophages through the activation of the MAPK and NF-kappaB signaling pathway. Upon activation, up-regulates the expression of CD80, CD86, CD69 and MHC II on macrophages, and induces the release of pro-inflammatory cytokines such as TNF, IL1B, IL6, CCL2 and nitric oxide. May play a role in inhibition of proliferation and migration. The protein is Transmembrane protein 106A (Tmem106a) of Rattus norvegicus (Rat).